The primary structure comprises 1365 residues: DNA-directed RNA polymerase subunit beta'' (1365 aa).

Zn(2+) contacts are provided by cysteine 224, cysteine 295, cysteine 302, and cysteine 305.

Belongs to the RNA polymerase beta' chain family. RpoC2 subfamily. In terms of assembly, in plastids the minimal PEP RNA polymerase catalytic core is composed of four subunits: alpha, beta, beta', and beta''. When a (nuclear-encoded) sigma factor is associated with the core the holoenzyme is formed, which can initiate transcription. Zn(2+) is required as a cofactor.

The protein localises to the plastid. The protein resides in the chloroplast. It catalyses the reaction RNA(n) + a ribonucleoside 5'-triphosphate = RNA(n+1) + diphosphate. Functionally, DNA-dependent RNA polymerase catalyzes the transcription of DNA into RNA using the four ribonucleoside triphosphates as substrates. In Fagopyrum esculentum subsp. ancestrale (Wild buckwheat), this protein is DNA-directed RNA polymerase subunit beta''.